A 295-amino-acid polypeptide reads, in one-letter code: Protoheme IX farnesyltransferase (295 aa).

9 helical membrane-spanning segments follow: residues 30-50 (LVVLTGVTGIIIAPGNIHPLI), 51-71 (AVISTLCIALGSGAAGAINMW), 93-115 (ISRSSALEVGLVLSFISVTIMMI), 119-136 (YISGILLAISIGFYIYVY), 148-168 (IVIGGAAGALPPIIGWTSVTG), 175-195 (LVLFLIIFMWTPPHFWALSLL), 219-239 (IHILVYSILLFPITLLPGLFL), 244-264 (LYEITAIPLGLMFVVQAFQVF), and 275-295 (MFTYSIIYLFILFTCIMLSSF).

The protein belongs to the UbiA prenyltransferase family. Protoheme IX farnesyltransferase subfamily.

It localises to the cell inner membrane. The catalysed reaction is heme b + (2E,6E)-farnesyl diphosphate + H2O = Fe(II)-heme o + diphosphate. It participates in porphyrin-containing compound metabolism; heme O biosynthesis; heme O from protoheme: step 1/1. In terms of biological role, converts heme B (protoheme IX) to heme O by substitution of the vinyl group on carbon 2 of heme B porphyrin ring with a hydroxyethyl farnesyl side group. The chain is Protoheme IX farnesyltransferase from Ehrlichia ruminantium (strain Gardel).